The following is a 218-amino-acid chain: Small ribosomal subunit protein uS3c (218 aa).

The 72-residue stretch at 47-118 (VQKNMRTSSG…KLNIAVTRIA (72 aa)) folds into the KH type-2 domain.

This sequence belongs to the universal ribosomal protein uS3 family. As to quaternary structure, part of the 30S ribosomal subunit.

The protein resides in the plastid. It localises to the chloroplast. The sequence is that of Small ribosomal subunit protein uS3c (rps3) from Solanum bulbocastanum (Wild potato).